The chain runs to 425 residues: Phosphoribosylamine--glycine ligase (425 aa).

The ATP-grasp domain maps to 110–317 (KEFMKRHGIP…LFDALLASVE (208 aa)). An ATP-binding site is contributed by 137–198 (ETCPTFPQVI…EAFLSGQEAS (62 aa)). Mg(2+)-binding residues include E287 and N289.

Belongs to the GARS family. Requires Mg(2+) as cofactor. Mn(2+) is required as a cofactor.

The catalysed reaction is 5-phospho-beta-D-ribosylamine + glycine + ATP = N(1)-(5-phospho-beta-D-ribosyl)glycinamide + ADP + phosphate + H(+). It participates in purine metabolism; IMP biosynthesis via de novo pathway; N(1)-(5-phospho-D-ribosyl)glycinamide from 5-phospho-alpha-D-ribose 1-diphosphate: step 2/2. In Chlorobaculum tepidum (strain ATCC 49652 / DSM 12025 / NBRC 103806 / TLS) (Chlorobium tepidum), this protein is Phosphoribosylamine--glycine ligase.